Here is a 573-residue protein sequence, read N- to C-terminus: Dihydroxy-acid dehydratase (573 aa).

A [2Fe-2S] cluster-binding site is contributed by Cys-62. Residue Asp-94 coordinates Mg(2+). Cys-135 lines the [2Fe-2S] cluster pocket. The Mg(2+) site is built by Asp-136 and Lys-137. Lys-137 is subject to N6-carboxylysine. Cys-212 contacts [2Fe-2S] cluster. Glu-463 is a Mg(2+) binding site. The Proton acceptor role is filled by Ser-489.

The protein belongs to the IlvD/Edd family. In terms of assembly, homodimer. Requires [2Fe-2S] cluster as cofactor. Mg(2+) serves as cofactor.

It carries out the reaction (2R)-2,3-dihydroxy-3-methylbutanoate = 3-methyl-2-oxobutanoate + H2O. It catalyses the reaction (2R,3R)-2,3-dihydroxy-3-methylpentanoate = (S)-3-methyl-2-oxopentanoate + H2O. It participates in amino-acid biosynthesis; L-isoleucine biosynthesis; L-isoleucine from 2-oxobutanoate: step 3/4. The protein operates within amino-acid biosynthesis; L-valine biosynthesis; L-valine from pyruvate: step 3/4. In terms of biological role, functions in the biosynthesis of branched-chain amino acids. Catalyzes the dehydration of (2R,3R)-2,3-dihydroxy-3-methylpentanoate (2,3-dihydroxy-3-methylvalerate) into 2-oxo-3-methylpentanoate (2-oxo-3-methylvalerate) and of (2R)-2,3-dihydroxy-3-methylbutanoate (2,3-dihydroxyisovalerate) into 2-oxo-3-methylbutanoate (2-oxoisovalerate), the penultimate precursor to L-isoleucine and L-valine, respectively. This chain is Dihydroxy-acid dehydratase, found in Renibacterium salmoninarum (strain ATCC 33209 / DSM 20767 / JCM 11484 / NBRC 15589 / NCIMB 2235).